We begin with the raw amino-acid sequence, 156 residues long: Acanthoscurrin-1 (156 aa).

Residues 1–23 form the signal peptide; the sequence is MAFRMKLVVCIVLLSTLAVMSSA. Residue K155 is modified to Lysine amide.

In terms of tissue distribution, expressed in hemocytes and secreted into the plasma following bacterial immune challenge.

It is found in the secreted. In terms of biological role, antimicrobial protein. Strong activity against the Gram-negative bacterium E.coli SBS363 and yeast C.albicans. No detectable activity against the Gram-positive bacterium M.luteus. The sequence is that of Acanthoscurrin-1 from Acanthoscurria gomesiana (Tarantula spider).